Reading from the N-terminus, the 238-residue chain is Pyridoxine 5'-phosphate synthase (238 aa).

Asn7 is a binding site for 3-amino-2-oxopropyl phosphate. 9 to 10 (DH) serves as a coordination point for 1-deoxy-D-xylulose 5-phosphate. 3-amino-2-oxopropyl phosphate is bound at residue Arg18. His43 functions as the Proton acceptor in the catalytic mechanism. Arg45 and His50 together coordinate 1-deoxy-D-xylulose 5-phosphate. The active-site Proton acceptor is the Glu70. Residue Thr100 participates in 1-deoxy-D-xylulose 5-phosphate binding. The Proton donor role is filled by His191. 3-amino-2-oxopropyl phosphate-binding positions include Gly192 and 213 to 214 (GH).

This sequence belongs to the PNP synthase family. In terms of assembly, homooctamer; tetramer of dimers.

It localises to the cytoplasm. The catalysed reaction is 3-amino-2-oxopropyl phosphate + 1-deoxy-D-xylulose 5-phosphate = pyridoxine 5'-phosphate + phosphate + 2 H2O + H(+). The protein operates within cofactor biosynthesis; pyridoxine 5'-phosphate biosynthesis; pyridoxine 5'-phosphate from D-erythrose 4-phosphate: step 5/5. Its function is as follows. Catalyzes the complicated ring closure reaction between the two acyclic compounds 1-deoxy-D-xylulose-5-phosphate (DXP) and 3-amino-2-oxopropyl phosphate (1-amino-acetone-3-phosphate or AAP) to form pyridoxine 5'-phosphate (PNP) and inorganic phosphate. This Thermosynechococcus vestitus (strain NIES-2133 / IAM M-273 / BP-1) protein is Pyridoxine 5'-phosphate synthase.